A 145-amino-acid chain; its full sequence is Putative pre-16S rRNA nuclease (145 aa).

It belongs to the YqgF nuclease family.

It is found in the cytoplasm. Could be a nuclease involved in processing of the 5'-end of pre-16S rRNA. This chain is Putative pre-16S rRNA nuclease, found in Prochlorococcus marinus (strain MIT 9211).